The following is a 200-amino-acid chain: MIALVQGRVAAIGLDAVVVVVGGVGMRVLATPATLAGLRVEADCELHTSLVVREDSLTLFGFADADERDVFELVQTVSGVGPRLALAMLAVHTPDGLRRAVAQEDLAALVRVPGIGRKGASRIVLELGDRLGPAQGAAPAAPVAVDDGADVVDALVGLGWPVRQAQDAVRGVLEDADGTAPDAAGLLRAALRSLAGDARG.

The segment at 1 to 63 (MIALVQGRVA…EDSLTLFGFA (63 aa)) is domain I. The segment at 64 to 138 (DADERDVFEL…DRLGPAQGAA (75 aa)) is domain II. Residues 138–142 (APAAP) are flexible linker. Positions 143–200 (VAVDDGADVVDALVGLGWPVRQAQDAVRGVLEDADGTAPDAAGLLRAALRSLAGDARG) are domain III.

This sequence belongs to the RuvA family. As to quaternary structure, homotetramer. Forms an RuvA(8)-RuvB(12)-Holliday junction (HJ) complex. HJ DNA is sandwiched between 2 RuvA tetramers; dsDNA enters through RuvA and exits via RuvB. An RuvB hexamer assembles on each DNA strand where it exits the tetramer. Each RuvB hexamer is contacted by two RuvA subunits (via domain III) on 2 adjacent RuvB subunits; this complex drives branch migration. In the full resolvosome a probable DNA-RuvA(4)-RuvB(12)-RuvC(2) complex forms which resolves the HJ.

It is found in the cytoplasm. Functionally, the RuvA-RuvB-RuvC complex processes Holliday junction (HJ) DNA during genetic recombination and DNA repair, while the RuvA-RuvB complex plays an important role in the rescue of blocked DNA replication forks via replication fork reversal (RFR). RuvA specifically binds to HJ cruciform DNA, conferring on it an open structure. The RuvB hexamer acts as an ATP-dependent pump, pulling dsDNA into and through the RuvAB complex. HJ branch migration allows RuvC to scan DNA until it finds its consensus sequence, where it cleaves and resolves the cruciform DNA. The sequence is that of Holliday junction branch migration complex subunit RuvA from Beutenbergia cavernae (strain ATCC BAA-8 / DSM 12333 / CCUG 43141 / JCM 11478 / NBRC 16432 / NCIMB 13614 / HKI 0122).